A 131-amino-acid chain; its full sequence is Small ribosomal subunit protein uS8 (131 aa).

The protein belongs to the universal ribosomal protein uS8 family. In terms of assembly, part of the 30S ribosomal subunit. Contacts proteins S5 and S12.

In terms of biological role, one of the primary rRNA binding proteins, it binds directly to 16S rRNA central domain where it helps coordinate assembly of the platform of the 30S subunit. The chain is Small ribosomal subunit protein uS8 from Wolinella succinogenes (strain ATCC 29543 / DSM 1740 / CCUG 13145 / JCM 31913 / LMG 7466 / NCTC 11488 / FDC 602W) (Vibrio succinogenes).